A 129-amino-acid polypeptide reads, in one-letter code: MAPKVALFLALSLLFAATAHGCEPNCSGPVVPTPPVVPTPSSHSHGRCPIDALKLKVCAKVLGLVKVGLPQYEQCCPLLEGLVDLDAALCLCTAIKANVLGIHLNVPLSLNFILNNCGRICPEDFTCPN.

Residues 1 to 19 (MAPKVALFLALSLLFAATA) constitute a signal peptide (or 21). Asparagine 25 carries an N-linked (GlcNAc...) asparagine glycan. 2 repeat units span residues 29-34 (PVVPTP) and 35-40 (PVVPTP). Residues 29–40 (PVVPTPPVVPTP) form a 2 X 6 AA tandem repeats of P-V-V-P-T-P region.

To carrot DC2.15 and PEMB3. As to expression, cortical ground meristem of developing roots.

Its function is as follows. Delineates a novel subset of developing cortical cells. It is probably involved in some aspect of transport of molecules to or from the vasculature. The protein is Cortical cell-delineating protein of Zea mays (Maize).